Reading from the N-terminus, the 897-residue chain is Beta-galactosidase (897 aa).

Glu-459 (proton donor) is an active-site residue. Catalysis depends on Glu-525, which acts as the Nucleophile.

Belongs to the glycosyl hydrolase 2 family.

It catalyses the reaction Hydrolysis of terminal non-reducing beta-D-galactose residues in beta-D-galactosides.. The sequence is that of Beta-galactosidase (cbgA) from Clostridium acetobutylicum.